Consider the following 200-residue polypeptide: MEQQKALDLSFFEQSTIEVAKGLIGMHLVHELDGVTLIGRITETEAYLGVLDRACHSYGRRRTKRTAILYEEAGRCYTYTMHTHCLLNVVCEQKGQPEAVLIRAIEPISGVKEMERLRGKPHTSREFANGPGKLTKAMGITMADYGRLLTEPPLYFAKGDHTNASIVATKRIGIKGAGPCSHHPWRFIDGNSRAVSAYRP.

This sequence belongs to the DNA glycosylase MPG family.

The chain is Putative 3-methyladenine DNA glycosylase from Shouchella clausii (strain KSM-K16) (Alkalihalobacillus clausii).